We begin with the raw amino-acid sequence, 364 residues long: tRNA N6-adenosine threonylcarbamoyltransferase (364 aa).

Residues His115 and His119 each coordinate Fe cation. Residues 137-141, Asp170, Gly183, and Asn288 contribute to the substrate site; that span reads LVSGG. Asp316 is a binding site for Fe cation.

Belongs to the KAE1 / TsaD family. The cofactor is Fe(2+).

It is found in the cytoplasm. The catalysed reaction is L-threonylcarbamoyladenylate + adenosine(37) in tRNA = N(6)-L-threonylcarbamoyladenosine(37) in tRNA + AMP + H(+). Its function is as follows. Required for the formation of a threonylcarbamoyl group on adenosine at position 37 (t(6)A37) in tRNAs that read codons beginning with adenine. Is involved in the transfer of the threonylcarbamoyl moiety of threonylcarbamoyl-AMP (TC-AMP) to the N6 group of A37, together with TsaE and TsaB. TsaD likely plays a direct catalytic role in this reaction. This is tRNA N6-adenosine threonylcarbamoyltransferase from Bartonella bacilliformis (strain ATCC 35685 / KC583 / Herrer 020/F12,63).